The following is a 101-amino-acid chain: Protein Tat (101 aa).

The interaction with human CREBBP stretch occupies residues 1–24 (MEPVDPNREPWNHPGSQPKTACTN). Residues 1-48 (MEPVDPNREPWNHPGSQPKTACTNCYCKKCCYHCQVCFLQKGLGISYG) form a transactivation region. 3 residues coordinate Zn(2+): cysteine 22, cysteine 25, and cysteine 27. Residues 22 to 37 (CTNCYCKKCCYHCQVC) are cysteine-rich. Position 28 is an N6-acetyllysine; by host PCAF (lysine 28). 4 residues coordinate Zn(2+): cysteine 30, histidine 33, cysteine 34, and cysteine 37. Residues 38-48 (FLQKGLGISYG) form a core region. The segment at 48–101 (GRKKRRQRRSAPPGSKTHQDLIPKQPLSQTQRKPTGPEESKKEVESKAEPDRFD) is disordered. A Nuclear localization signal, RNA-binding (TAR), and protein transduction motif is present at residues 49 to 57 (RKKRRQRRS). The interval 49–86 (RKKRRQRRSAPPGSKTHQDLIPKQPLSQTQRKPTGPEE) is interaction with the host capping enzyme RNGTT. 2 positions are modified to N6-acetyllysine; by host EP300 and GCN5L2: lysine 50 and lysine 51. Arginine 52 and arginine 53 each carry asymmetric dimethylarginine; by host PRMT6. Lysine 71 participates in a covalent cross-link: Glycyl lysine isopeptide (Lys-Gly) (interchain with G-Cter in ubiquitin). The span at 82–101 (TGPEESKKEVESKAEPDRFD) shows a compositional bias: basic and acidic residues.

This sequence belongs to the lentiviruses Tat family. As to quaternary structure, interacts with host CCNT1. Associates with the P-TEFb complex composed at least of Tat, P-TEFb (CDK9 and CCNT1), TAR RNA, RNA Pol II. Recruits the HATs CREBBP, TAF1/TFIID, EP300, PCAF and GCN5L2. Interacts with host KAT5/Tip60; this interaction targets the latter to degradation. Interacts with the host deacetylase SIRT1. Interacts with host capping enzyme RNGTT; this interaction stimulates RNGTT. Binds to host KDR, and to the host integrins ITGAV/ITGB3 and ITGA5/ITGB1. Interacts with host KPNB1/importin beta-1 without previous binding to KPNA1/importin alpha-1. Interacts with EIF2AK2. Interacts with host nucleosome assembly protein NAP1L1; this interaction may be required for the transport of Tat within the nucleus, since the two proteins interact at the nuclear rim. Interacts with host C1QBP/SF2P32; this interaction involves lysine-acetylated Tat. Interacts with the host chemokine receptors CCR2, CCR3 and CXCR4. Interacts with host DPP4/CD26; this interaction may trigger an anti-proliferative effect. Interacts with host LDLR. Interacts with the host extracellular matrix metalloproteinase MMP1. Interacts with host PRMT6; this interaction mediates Tat's methylation. Interacts with, and is ubiquitinated by MDM2/Hdm2. Interacts with host PSMC3 and HTATIP2. Interacts with STAB1; this interaction may overcome SATB1-mediated repression of IL2 and IL2RA (interleukin) in T cells by binding to the same domain than HDAC1. Interacts (when acetylated) with human CDK13, thereby increasing HIV-1 mRNA splicing and promoting the production of the doubly spliced HIV-1 protein Nef. Interacts with host TBP; this interaction modulates the activity of transcriptional pre-initiation complex. Interacts with host RELA. Interacts with host PLSCR1; this interaction negatively regulates Tat transactivation activity by altering its subcellular distribution. Asymmetrical arginine methylation by host PRMT6 seems to diminish the transactivation capacity of Tat and affects the interaction with host CCNT1. Post-translationally, acetylation by EP300, CREBBP, GCN5L2/GCN5 and PCAF regulates the transactivation activity of Tat. EP300-mediated acetylation of Lys-50 promotes dissociation of Tat from the TAR RNA through the competitive binding to PCAF's bromodomain. In addition, the non-acetylated Tat's N-terminus can also interact with PCAF. PCAF-mediated acetylation of Lys-28 enhances Tat's binding to CCNT1. Lys-50 is deacetylated by SIRT1. In terms of processing, polyubiquitination by host MDM2 does not target Tat to degradation, but activates its transactivation function and fosters interaction with CCNT1 and TAR RNA. Phosphorylated by EIF2AK2 on serine and threonine residues adjacent to the basic region important for TAR RNA binding and function. Phosphorylation of Tat by EIF2AK2 is dependent on the prior activation of EIF2AK2 by dsRNA.

The protein localises to the host nucleus. It is found in the host nucleolus. The protein resides in the host cytoplasm. It localises to the secreted. Functionally, transcriptional activator that increases RNA Pol II processivity, thereby increasing the level of full-length viral transcripts. Recognizes a hairpin structure at the 5'-LTR of the nascent viral mRNAs referred to as the transactivation responsive RNA element (TAR) and recruits the cyclin T1-CDK9 complex (P-TEFb complex) that will in turn hyperphosphorylate the RNA polymerase II to allow efficient elongation. The CDK9 component of P-TEFb and other Tat-activated kinases hyperphosphorylate the C-terminus of RNA Pol II that becomes stabilized and much more processive. Other factors such as HTATSF1/Tat-SF1, SUPT5H/SPT5, and HTATIP2 are also important for Tat's function. Besides its effect on RNA Pol II processivity, Tat induces chromatin remodeling of proviral genes by recruiting the histone acetyltransferases (HATs) CREBBP, EP300 and PCAF to the chromatin. This also contributes to the increase in proviral transcription rate, especially when the provirus integrates in transcriptionally silent region of the host genome. To ensure maximal activation of the LTR, Tat mediates nuclear translocation of NF-kappa-B by interacting with host RELA. Through its interaction with host TBP, Tat may also modulate transcription initiation. Tat can reactivate a latently infected cell by penetrating in it and transactivating its LTR promoter. In the cytoplasm, Tat is thought to act as a translational activator of HIV-1 mRNAs. Its function is as follows. Extracellular circulating Tat can be endocytosed by surrounding uninfected cells via the binding to several surface receptors such as CD26, CXCR4, heparan sulfate proteoglycans (HSPG) or LDLR. Neurons are rarely infected, but they internalize Tat via their LDLR. Through its interaction with nuclear HATs, Tat is potentially able to control the acetylation-dependent cellular gene expression. Modulates the expression of many cellular genes involved in cell survival, proliferation or in coding for cytokines or cytokine receptors. Tat plays a role in T-cell and neurons apoptosis. Tat induced neurotoxicity and apoptosis probably contribute to neuroAIDS. Circulating Tat also acts as a chemokine-like and/or growth factor-like molecule that binds to specific receptors on the surface of the cells, affecting many cellular pathways. In the vascular system, Tat binds to ITGAV/ITGB3 and ITGA5/ITGB1 integrins dimers at the surface of endothelial cells and competes with bFGF for heparin-binding sites, leading to an excess of soluble bFGF. This chain is Protein Tat, found in Homo sapiens (Human).